The chain runs to 611 residues: DNA mismatch repair protein MutL (611 aa).

This sequence belongs to the DNA mismatch repair MutL/HexB family.

In terms of biological role, this protein is involved in the repair of mismatches in DNA. It is required for dam-dependent methyl-directed DNA mismatch repair. May act as a 'molecular matchmaker', a protein that promotes the formation of a stable complex between two or more DNA-binding proteins in an ATP-dependent manner without itself being part of a final effector complex. The polypeptide is DNA mismatch repair protein MutL (Rickettsia bellii (strain RML369-C)).